The sequence spans 312 residues: Non-structural protein 2 (312 aa).

Residues 107–109, lysine 185, and 218–220 each bind ATP; these read QVR and HGK. Residues 202-238 are RNA-binding; it reads FAAYIRYNFNKFAAISHGKRHWRLVLHSQLMSHAERL. The active-site For NTPase and RTPase activities is histidine 222. Arginine 224 serves as a coordination point for ATP.

It belongs to the rotavirus NSP2 family. Homooctamer. Interacts with VP1; this interaction is weak. Interacts with NSP5; this interaction leads to up-regulation of NSP5 phosphorylation and formation of viral factories. Interacts with host DCP1A, DCP1B, DDX6, EDC4 and EIF2S1/eIF2-alpha; these interactions are probably part of the sequestration of some host SGs and PBs proteins in viral factories. Requires Mg(2+) as cofactor.

It is found in the host cytoplasm. Participates in replication and packaging of the viral genome. Plays a crucial role, together with NSP5, in the formation of virus factories (viroplasms), which are large inclusions in the host cytoplasm where replication intermediates are assembled and viral RNA replication takes place. Displays ssRNA binding, NTPase, RNA triphosphatase (RTPase) and ATP-independent helix-unwinding activities. The unwinding activity may prepare and organize plus-strand RNAs for packaging and replication by removing interfering secondary structures. The RTPase activity plays a role in the removal of the gamma-phosphate from the rotavirus RNA minus strands of dsRNA genome segments. Participates in the selective exclusion of host proteins from stress granules (SG) and P bodies (PB). Also participates in the sequestration of these remodeled organelles in viral factories. This is Non-structural protein 2 from Rotavirus C (isolate RVC/Human/United Kingdom/Bristol/1989) (RV-C).